Consider the following 123-residue polypeptide: Large ribosomal subunit protein uL14 (123 aa).

Belongs to the universal ribosomal protein uL14 family. Part of the 50S ribosomal subunit. Forms a cluster with proteins L3 and L19. In the 70S ribosome, L14 and L19 interact and together make contacts with the 16S rRNA in bridges B5 and B8.

Functionally, binds to 23S rRNA. Forms part of two intersubunit bridges in the 70S ribosome. This is Large ribosomal subunit protein uL14 from Blochmanniella pennsylvanica (strain BPEN).